The primary structure comprises 127 residues: Fatty acid binding protein 1-A, liver (127 aa).

Belongs to the calycin superfamily. Fatty-acid binding protein (FABP) family. As to expression, in adults, weakly expressed in the intestine.

The protein resides in the cytoplasm. Binds free fatty acids and their coenzyme A derivatives, bilirubin, and some other small molecules in the cytoplasm. May be involved in intracellular lipid transport. The protein is Fatty acid binding protein 1-A, liver of Danio rerio (Zebrafish).